The primary structure comprises 231 residues: Eukaryotic translation initiation factor 4E allele A (231 aa).

The span at Met1 to Ala20 shows a compositional bias: basic and acidic residues. Residues Met1–Glu36 form a disordered region. Residues Glu27–Glu36 are compositionally biased toward acidic residues. EIF4G-binding regions lie at residues His56–Glu59 and Phe66–His102. Residues Arg74–Gly79, Lys106, and Trp124–Glu125 each bind mRNA. Cys129 and Cys167 form a disulfide bridge. Residues Tyr150–Gln159 are EIF4G-binding. Residues Arg174–Lys179 and Lys219–Arg223 each bind mRNA.

It belongs to the eukaryotic initiation factor 4E family. As to quaternary structure, EIF4F is a multi-subunit complex, the composition of which varies with external and internal environmental conditions. It is composed of at least EIF4A, EIF4E and EIF4G. EIF4E is also known to interact with other partners. In higher plants two isoforms of EIF4F have been identified, named isoform EIF4F and isoform EIF(iso)4F. Isoform EIF4F has subunits p220 and p26, whereas isoform EIF(iso)4F has subunits p82 and p28. In terms of assembly, (Microbial infection) Interacts with viral genome-linked protein (VPg); this interaction is possible in susceptible hosts but impaired in resistant plants. According to the redox status, the Cys-129-Cys-167 disulfide bridge may have a role in regulating protein function by affecting its ability to bind capped mRNA.

The protein localises to the nucleus. The protein resides in the cytoplasm. Functionally, component of the protein complex eIF4F, which is involved in the recognition of the mRNA cap, ATP-dependent unwinding of 5'-terminal secondary structure and recruitment of mRNA to the ribosome. Recognizes and binds the 7-methylguanosine-containing mRNA cap during an early step in the initiation of protein synthesis and facilitates ribosome binding by inducing the unwinding of the mRNAs secondary structures. Key component of recessive resistance to potyviruses. (Microbial infection) Susceptibility host factor required for viral infection (e.g. Potato virus Y (PVY)) by recruiting viral RNAs to the host ribosomal complex via an interaction with viral genome-linked protein (VPg). This is Eukaryotic translation initiation factor 4E allele A from Solanum tuberosum (Potato).